Consider the following 570-residue polypeptide: Urease subunit alpha (570 aa).

Positions 132–570 constitute a Urease domain; it reads GGFDSHIHYI…LPLAQRYFLF (439 aa). Ni(2+) contacts are provided by histidine 137, histidine 139, and lysine 220. Lysine 220 bears the N6-carboxylysine mark. Histidine 222 provides a ligand contact to substrate. Histidine 249 and histidine 275 together coordinate Ni(2+). Residue histidine 323 is the Proton donor of the active site. Ni(2+) is bound at residue aspartate 363.

The protein belongs to the metallo-dependent hydrolases superfamily. Urease alpha subunit family. In terms of assembly, heterotrimer of UreA (gamma), UreB (beta) and UreC (alpha) subunits. Three heterotrimers associate to form the active enzyme. Requires Ni cation as cofactor. In terms of processing, carboxylation allows a single lysine to coordinate two nickel ions.

It localises to the cytoplasm. It catalyses the reaction urea + 2 H2O + H(+) = hydrogencarbonate + 2 NH4(+). Its pathway is nitrogen metabolism; urea degradation; CO(2) and NH(3) from urea (urease route): step 1/1. This chain is Urease subunit alpha, found in Ruegeria sp. (strain TM1040) (Silicibacter sp.).